Reading from the N-terminus, the 573-residue chain is Probable D-xylulose kinase A (573 aa).

4 residues coordinate substrate: H97, R168, D284, and N285. Residues W366, 471–472, and N475 each bind ATP; that span reads GG.

The protein belongs to the FGGY kinase family.

It is found in the cytoplasm. It carries out the reaction D-xylulose + ATP = D-xylulose 5-phosphate + ADP + H(+). In terms of biological role, highly specific D-xylulose kinase which participates in the catabolism of xylose. Xylose is a major component of hemicelluloses such as xylan. Most fungi utilize D-xylose via three enzymatic reactions, xylose reductase (XR), xylitol dehydrogenase (XDH), and xylulokinase, to form xylulose 5-phosphate, which enters pentose phosphate pathway. The sequence is that of Probable D-xylulose kinase A (xkiA) from Neosartorya fischeri (strain ATCC 1020 / DSM 3700 / CBS 544.65 / FGSC A1164 / JCM 1740 / NRRL 181 / WB 181) (Aspergillus fischerianus).